The primary structure comprises 375 residues: tRNA-specific 2-thiouridylase MnmA (375 aa).

Residues 16 to 23 and Met-42 contribute to the ATP site; that span reads GMSGGVDS. Residues 102–104 are interaction with target base in tRNA; it reads NPD. Cys-107 serves as the catalytic Nucleophile. Cys-107 and Cys-203 are oxidised to a cystine. Gly-131 provides a ligand contact to ATP. The segment at 153 to 155 is interaction with tRNA; it reads KDQ. Cys-203 (cysteine persulfide intermediate) is an active-site residue. An interaction with tRNA region spans residues 315–316; sequence RY.

The protein belongs to the MnmA/TRMU family.

Its subcellular location is the cytoplasm. The enzyme catalyses S-sulfanyl-L-cysteinyl-[protein] + uridine(34) in tRNA + AH2 + ATP = 2-thiouridine(34) in tRNA + L-cysteinyl-[protein] + A + AMP + diphosphate + H(+). Catalyzes the 2-thiolation of uridine at the wobble position (U34) of tRNA, leading to the formation of s(2)U34. This chain is tRNA-specific 2-thiouridylase MnmA, found in Pseudomonas aeruginosa (strain UCBPP-PA14).